A 251-amino-acid chain; its full sequence is Chlorocatechol 1,2-dioxygenase (251 aa).

The Fe cation site is built by Y130, Y164, H188, and H190.

This sequence belongs to the intradiol ring-cleavage dioxygenase family. The cofactor is Fe(3+).

It catalyses the reaction 3-chlorocatechol + O2 = (2E,4Z)-2-chloromuconate + 2 H(+). It carries out the reaction 3,4-dichlorocatechol + O2 = (2Z,4Z)-2,3-dichloromuconate + 2 H(+). The enzyme catalyses 3,5-dichlorocatechol + O2 = (2E,4E)-2,4-dichloromuconate + 2 H(+). The catalysed reaction is 3,6-dichlorocatechol + O2 = (2E,4E)-2,5-dichloromuconate + H(+). It catalyses the reaction 3,4,6-trichlorocatechol + O2 = (2Z,4E)-2,3,5-trichloromuconate + H(+). Its pathway is xenobiotic degradation. Its function is as follows. Chlorocatechol 1,2-dioxygenase involved in the degradation of chlorinated benzenes, that occurs via chlorocatechol intermediates. Displays broad substrate specificity. Preferentially cleaves 3-chlorocatechol and 3,4-dichlorocatechol, and shows lower activity on 3,5-dichlorocatechol, 3,6-dichlorocatechol and 3,4,6-trichlorocatechol in vitro. Is not able to convert 3,4,5-trichlorocatechol and 3,4,5,6-tetrachlorocatechol. Thus, probably functions in the degradation pathways of 1,2-dichlorobenzene, 1,4-dichlorobenzene and 1,2,4-trichlorobenzene (via 3,4-dichlorocatechol, 3,6-dichlorocatechol and 3,4,6-trichlorocatechol intermediates, respectively), which allow Pseudomonas sp. strain P51 to grow on these substrates as the sole carbon and energy source. This Pseudomonas sp. (strain P51) protein is Chlorocatechol 1,2-dioxygenase.